We begin with the raw amino-acid sequence, 504 residues long: ATP synthase subunit alpha (504 aa).

ATP is bound at residue 169–176; sequence GDRQIGKT.

This sequence belongs to the ATPase alpha/beta chains family. As to quaternary structure, F-type ATPases have 2 components, CF(1) - the catalytic core - and CF(0) - the membrane proton channel. CF(1) has five subunits: alpha(3), beta(3), gamma(1), delta(1), epsilon(1). CF(0) has three main subunits: a(1), b(2) and c(9-12). The alpha and beta chains form an alternating ring which encloses part of the gamma chain. CF(1) is attached to CF(0) by a central stalk formed by the gamma and epsilon chains, while a peripheral stalk is formed by the delta and b chains.

It is found in the cell membrane. The catalysed reaction is ATP + H2O + 4 H(+)(in) = ADP + phosphate + 5 H(+)(out). In terms of biological role, produces ATP from ADP in the presence of a proton gradient across the membrane. The alpha chain is a regulatory subunit. This is ATP synthase subunit alpha from Syntrophomonas wolfei subsp. wolfei (strain DSM 2245B / Goettingen).